We begin with the raw amino-acid sequence, 189 residues long: uncharacterized protein (189 aa).

The protein belongs to the isochorismatase family.

This is an uncharacterized protein from Bacillus subtilis (strain 168).